A 141-amino-acid chain; its full sequence is Holo-[acyl-carrier-protein] synthase (141 aa).

Residues aspartate 8 and glutamate 63 each coordinate Mg(2+).

It belongs to the P-Pant transferase superfamily. AcpS family. Mg(2+) is required as a cofactor.

The protein localises to the cytoplasm. It catalyses the reaction apo-[ACP] + CoA = holo-[ACP] + adenosine 3',5'-bisphosphate + H(+). Transfers the 4'-phosphopantetheine moiety from coenzyme A to a Ser of acyl-carrier-protein. This is Holo-[acyl-carrier-protein] synthase from Rhodospirillum centenum (strain ATCC 51521 / SW).